Here is an 805-residue protein sequence, read N- to C-terminus: Arginine/serine-rich protein PNISR (805 aa).

The span at 75–88 shows a compositional bias: polar residues; the sequence is NNHGNFQGDSNFNR. Disordered stretches follow at residues 75-331 and 382-805; these read NNHG…EEKE and LTGL…SRSR. Pro residues-rich tracts occupy residues 100-115 and 183-194; these read PPHP…PAPG and YWQPGPPGPPAP. A compositionally biased stretch (basic and acidic residues) spans 197-210; sequence NRRERPPSFRDRQR. A phosphoserine mark is found at S204 and S211. K218 participates in a covalent cross-link: Glycyl lysine isopeptide (Lys-Gly) (interchain with G-Cter in SUMO2). Residues 237–276 adopt a coiled-coil conformation; it reads REGLEKMEREKQKKLEKERMEQQRSQLSKKEKKATEDAEG. A compositionally biased stretch (basic and acidic residues) spans 238-258; the sequence is EGLEKMEREKQKKLEKERMEQ. Phosphoserine is present on residues S290, S304, S313, and S321. Positions 290-299 are enriched in acidic residues; that stretch reads SDEEDEDAEN. Positions 384 to 393 are enriched in gly residues; sequence GLGGLGGYGS. A compositionally biased stretch (basic and acidic residues) spans 421–463; it reads QKQEAFWRKEKEQQLLQDKQIEEEKQQTERVTKEMNEFIHREQ. The stretch at 427–461 forms a coiled coil; the sequence is WRKEKEQQLLQDKQIEEEKQQTERVTKEMNEFIHR. S465 and S467 each carry phosphoserine. 2 stretches are compositionally biased toward basic and acidic residues: residues 473–486 and 494–508; these read EADR…KRTP and EPKR…ERGS. The residue at position 485 (T485) is a Phosphothreonine. Residue K496 forms a Glycyl lysine isopeptide (Lys-Gly) (interchain with G-Cter in SUMO2) linkage. Low complexity predominate over residues 509-550; the sequence is RSGSSSSGSSSSGSRTSSSSSSVSSSSYSSSSGSSCTSSRSS. Composition is skewed to basic residues over residues 551–560, 567–579, 587–598, and 607–639; these read SPKRRKRPSR, KARR…YSRR, TRGKLRDRRRSN, and RRNR…SRDR. A compositionally biased stretch (basic and acidic residues) spans 659–721; the sequence is EAKEQDRKKE…KRKRESERTF (63 aa). K703 participates in a covalent cross-link: Glycyl lysine isopeptide (Lys-Gly) (interchain with G-Cter in SUMO2). At S726 the chain carries Phosphoserine. Basic and acidic residues predominate over residues 732–753; that stretch reads IRHDSRQDSKKNATKDSKRHSG. The segment covering 754–767 has biased composition (low complexity); sequence SDSSGRSSSESPGS. Basic residues-rich tracts occupy residues 771–781 and 789–805; these read KKAKKPKHSRS and RSGK…SRSR.

Belongs to the splicing factor SR family. Interacts with PNN.

It localises to the nucleus speckle. This Mus musculus (Mouse) protein is Arginine/serine-rich protein PNISR (Pnisr).